Reading from the N-terminus, the 215-residue chain is Pyrrolidone-carboxylate peptidase (215 aa).

Residues Glu80, Cys143, and His167 contribute to the active site.

Belongs to the peptidase C15 family. Homotetramer.

Its subcellular location is the cytoplasm. It catalyses the reaction Release of an N-terminal pyroglutamyl group from a polypeptide, the second amino acid generally not being Pro.. Its function is as follows. Removes 5-oxoproline from various penultimate amino acid residues except L-proline. In Pectobacterium carotovorum subsp. carotovorum (strain PC1), this protein is Pyrrolidone-carboxylate peptidase.